A 167-amino-acid polypeptide reads, in one-letter code: Protein-lysine myristoyltransferase RtxC (167 aa).

Catalysis depends on residues H20 and D89.

Belongs to the RTX toxin acyltransferase family.

Its subcellular location is the cytoplasm. It catalyses the reaction tetradecanoyl-[ACP] + L-lysyl-[protein] = N(6)-tetradecanoyl-L-lysyl-[protein] + holo-[ACP] + H(+). In terms of biological role, protein-lysine myristoyltransferase that catalyzes myristoylation of the protoxin (RtxA) at two internal lysine residues, thereby converting it to the active toxin. The protein is Protein-lysine myristoyltransferase RtxC of Kingella kingae.